The sequence spans 405 residues: Exodeoxyribonuclease 7 large subunit (405 aa).

It belongs to the XseA family. As to quaternary structure, heterooligomer composed of large and small subunits.

It is found in the cytoplasm. It carries out the reaction Exonucleolytic cleavage in either 5'- to 3'- or 3'- to 5'-direction to yield nucleoside 5'-phosphates.. In terms of biological role, bidirectionally degrades single-stranded DNA into large acid-insoluble oligonucleotides, which are then degraded further into small acid-soluble oligonucleotides. The chain is Exodeoxyribonuclease 7 large subunit from Syntrophomonas wolfei subsp. wolfei (strain DSM 2245B / Goettingen).